We begin with the raw amino-acid sequence, 175 residues long: NADH-ubiquinone oxidoreductase chain 6 (175 aa).

Transmembrane regions (helical) follow at residues 1 to 21 (MMTYIVFILSVIFVIGFVGFS), 25 to 45 (SPIYGGLVLIVSGGVGCGIIM), 47 to 67 (FGGSFLGLMVFLIYLGGMLVV), 88 to 108 (TVMGVFLLGLLMEVMLVLYVL), and 149 to 169 (YGAWVVVVTGWSLLVGVLVIL).

It belongs to the complex I subunit 6 family. Core subunit of respiratory chain NADH dehydrogenase (Complex I) which is composed of 45 different subunits.

Its subcellular location is the mitochondrion inner membrane. The catalysed reaction is a ubiquinone + NADH + 5 H(+)(in) = a ubiquinol + NAD(+) + 4 H(+)(out). Core subunit of the mitochondrial membrane respiratory chain NADH dehydrogenase (Complex I) which catalyzes electron transfer from NADH through the respiratory chain, using ubiquinone as an electron acceptor. Essential for the catalytic activity and assembly of complex I. In Equus asinus (Donkey), this protein is NADH-ubiquinone oxidoreductase chain 6 (MT-ND6).